Consider the following 196-residue polypeptide: Pyroglutamyl-peptidase 1-like protein (196 aa).

Catalysis depends on residues Glu-65, Cys-127, and His-146.

This sequence belongs to the peptidase C15 family.

In Homo sapiens (Human), this protein is Pyroglutamyl-peptidase 1-like protein (PGPEP1L).